A 302-amino-acid polypeptide reads, in one-letter code: tRNA pseudouridine synthase B (302 aa).

Residue Asp43 is the Nucleophile of the active site.

This sequence belongs to the pseudouridine synthase TruB family. Type 1 subfamily.

The enzyme catalyses uridine(55) in tRNA = pseudouridine(55) in tRNA. Its function is as follows. Responsible for synthesis of pseudouridine from uracil-55 in the psi GC loop of transfer RNAs. This Burkholderia pseudomallei (strain 668) protein is tRNA pseudouridine synthase B.